A 405-amino-acid chain; its full sequence is Tyrosine--tRNA ligase (405 aa).

A 'HIGH' region motif is present at residues 46–55 (PTRPDIHLGH). The 'KMSKS' region motif lies at 230–234 (KMSKS). K233 contributes to the ATP binding site. Residues 341–404 (MGLAALMVKA…GKKKFVKIVV (64 aa)) enclose the S4 RNA-binding domain.

It belongs to the class-I aminoacyl-tRNA synthetase family. TyrS type 2 subfamily. In terms of assembly, homodimer.

The protein localises to the cytoplasm. The catalysed reaction is tRNA(Tyr) + L-tyrosine + ATP = L-tyrosyl-tRNA(Tyr) + AMP + diphosphate + H(+). In terms of biological role, catalyzes the attachment of tyrosine to tRNA(Tyr) in a two-step reaction: tyrosine is first activated by ATP to form Tyr-AMP and then transferred to the acceptor end of tRNA(Tyr). The sequence is that of Tyrosine--tRNA ligase from Bdellovibrio bacteriovorus (strain ATCC 15356 / DSM 50701 / NCIMB 9529 / HD100).